The chain runs to 299 residues: Putative glycylpeptide N-tetradecanoyltransferase (299 aa).

Belongs to the NMT family.

It carries out the reaction N-terminal glycyl-[protein] + tetradecanoyl-CoA = N-tetradecanoylglycyl-[protein] + CoA + H(+). In terms of biological role, adds a myristoyl group to the N-terminal glycine residue of certain proteins. The protein is Putative glycylpeptide N-tetradecanoyltransferase of Amsacta moorei entomopoxvirus (AmEPV).